Consider the following 399-residue polypeptide: Probable 2,3-bisphosphoglycerate-independent phosphoglycerate mutase (399 aa).

This sequence belongs to the BPG-independent phosphoglycerate mutase family. A-PGAM subfamily.

It carries out the reaction (2R)-2-phosphoglycerate = (2R)-3-phosphoglycerate. Its pathway is carbohydrate degradation; glycolysis; pyruvate from D-glyceraldehyde 3-phosphate: step 3/5. Catalyzes the interconversion of 2-phosphoglycerate and 3-phosphoglycerate. The protein is Probable 2,3-bisphosphoglycerate-independent phosphoglycerate mutase of Geobacter sulfurreducens (strain ATCC 51573 / DSM 12127 / PCA).